The sequence spans 34 residues: Photosystem II reaction center protein Psb30 (34 aa).

Residues 7–27 form a helical membrane-spanning segment; the sequence is VAQLISLFLILTSGPAIIVLI.

The protein belongs to the Psb30/Ycf12 family. As to quaternary structure, PSII is composed of 1 copy each of membrane proteins PsbA, PsbB, PsbC, PsbD, PsbE, PsbF, PsbH, PsbI, PsbJ, PsbK, PsbL, PsbM, PsbT, PsbX, PsbY, PsbZ, Psb30/Ycf12, peripheral proteins of the oxygen-evolving complex and a large number of cofactors. It forms dimeric complexes.

It localises to the plastid. It is found in the chloroplast thylakoid membrane. In terms of biological role, a core subunit of photosystem II (PSII), probably helps stabilize the reaction center. The polypeptide is Photosystem II reaction center protein Psb30 (Rhodomonas salina (Cryptomonas salina)).